A 120-amino-acid polypeptide reads, in one-letter code: MKLNTKQTRIHKHKRVRKKVQGTSSRPRLCVFRSNKHIYAQIIDDTQGITLVATSSVNLNNKESDNIRPNCDTSRVVGKQLAEQSMKEGIKNVVFDRGGKLYHGRVKALAEAAKEAGMGF.

Belongs to the universal ribosomal protein uL18 family. Part of the 50S ribosomal subunit; contacts the 5S rRNA.

It is found in the plastid. The protein localises to the chloroplast. Functionally, binds 5S rRNA, forms part of the central protuberance of the 50S subunit. In Pyropia yezoensis (Susabi-nori), this protein is Large ribosomal subunit protein uL18c (rpl18).